The chain runs to 501 residues: Ribonuclease Y (501 aa).

A helical transmembrane segment spans residues 7 to 27 (LVVIALLGALTLLTAGHVLAL). The 67-residue stretch at 190–256 (VVRAVPLPEE…RLTLEKLVAD (67 aa)) folds into the KH domain. The region spanning 316 to 409 (VLAHLVESAH…TQAADAISGG (94 aa)) is the HD domain.

The protein belongs to the RNase Y family.

The protein resides in the cell membrane. Functionally, endoribonuclease that initiates mRNA decay. This chain is Ribonuclease Y, found in Thermobifida fusca (strain YX).